The primary structure comprises 533 residues: Glucose-6-phosphate isomerase (533 aa).

Glu341 (proton donor) is an active-site residue. Catalysis depends on residues His372 and Lys501.

It belongs to the GPI family.

Its subcellular location is the cytoplasm. It catalyses the reaction alpha-D-glucose 6-phosphate = beta-D-fructose 6-phosphate. It functions in the pathway carbohydrate biosynthesis; gluconeogenesis. Its pathway is carbohydrate degradation; glycolysis; D-glyceraldehyde 3-phosphate and glycerone phosphate from D-glucose: step 2/4. In terms of biological role, catalyzes the reversible isomerization of glucose-6-phosphate to fructose-6-phosphate. This chain is Glucose-6-phosphate isomerase, found in Cereibacter sphaeroides (strain KD131 / KCTC 12085) (Rhodobacter sphaeroides).